A 597-amino-acid chain; its full sequence is Centrosomal protein of 70 kDa (597 aa).

The disordered stretch occupies residues 1-24; sequence MFPVAPKPQDSNQPSDRLMTEKQQ. Coiled-coil stretches lie at residues 66–179 and 254–320; these read MRQN…QTEV and TYKG…QELI. Residues 483-516 form a TPR repeat; it reads NGVYPRMNEVYTRLGEMNNAVRNLQELLELDSSS.

As to quaternary structure, directly interacts with tubulin-gamma; this interaction determines centrosomal localization.

Its subcellular location is the cytoplasm. The protein localises to the cytoskeleton. The protein resides in the microtubule organizing center. It is found in the centrosome. In terms of biological role, plays a role in the organization of both preexisting and nascent microtubules in interphase cells. During mitosis, required for the organization and orientation of the mitotic spindle. This is Centrosomal protein of 70 kDa (CEP70) from Macaca fascicularis (Crab-eating macaque).